Consider the following 1173-residue polypeptide: Inner capsid protein VP3 (1173 aa).

Residues 1–53 (MSNLPKPASHFEPEKNVDDKGNVTGSAPPVSKDTPTQQASVSLPNQEEPTQQT) form a disordered region. Positions 9 to 21 (SHFEPEKNVDDKG) are enriched in basic and acidic residues. Over residues 33–53 (DTPTQQASVSLPNQEEPTQQT) the composition is skewed to polar residues.

It belongs to the turreted BTV-fold inner capsid family. As to quaternary structure, homodecamer; each decamer is made up of two conformers of VP2, called VP2A and VP2B. 12 homodecamers assemble to form an icosahedral capsid.

The protein localises to the virion. In terms of biological role, inner capsid protein that self-assembles to form an icosahedral capsid with a T=2 symmetry, which consists of 120 copies of VP2, with channels at each of its five-fold vertices. This capsid constitutes the innermost concentric layer of the viral mature particle. This Rice ragged stunt virus (isolate Thailand) (RRSV) protein is Inner capsid protein VP3.